Reading from the N-terminus, the 163-residue chain is NADH-quinone oxidoreductase subunit B (163 aa).

Positions 32, 33, 98, and 127 each coordinate [4Fe-4S] cluster.

This sequence belongs to the complex I 20 kDa subunit family. NDH-1 is composed of 14 different subunits. Subunits NuoB, C, D, E, F, and G constitute the peripheral sector of the complex. [4Fe-4S] cluster is required as a cofactor.

The protein resides in the cell inner membrane. The catalysed reaction is a quinone + NADH + 5 H(+)(in) = a quinol + NAD(+) + 4 H(+)(out). Its function is as follows. NDH-1 shuttles electrons from NADH, via FMN and iron-sulfur (Fe-S) centers, to quinones in the respiratory chain. Couples the redox reaction to proton translocation (for every two electrons transferred, four hydrogen ions are translocated across the cytoplasmic membrane), and thus conserves the redox energy in a proton gradient. The polypeptide is NADH-quinone oxidoreductase subunit B (Pelobacter propionicus (strain DSM 2379 / NBRC 103807 / OttBd1)).